The following is an 816-amino-acid chain: Acyl-homoserine lactone acylase QuiP (816 aa).

The N-terminal stretch at 1-33 is a signal peptide; it reads MASPALSHFLPRFGVAAAVAGVLSLTGCQTWNA. Catalysis depends on S262, which acts as the Nucleophile.

Belongs to the peptidase S45 family. As to quaternary structure, heterodimer of an alpha subunit and a beta subunit processed from the same precursor.

It is found in the periplasm. The enzyme catalyses an N-acyl-L-homoserine lactone + H2O = L-homoserine lactone + a carboxylate. Catalyzes the deacylation of acyl-homoserine lactone (AHL or acyl-HSL), releasing homoserine lactone (HSL) and the corresponding fatty acid. Possesses a specificity for the degradation of long-chain acyl-HSLs (side chains of seven or more carbons in length). This is Acyl-homoserine lactone acylase QuiP (quiP) from Pseudomonas fluorescens (strain Pf0-1).